The following is a 140-amino-acid chain: Cytochrome B5 isoform D (140 aa).

Residues 5–81 (GKVFTLSEVS…LDEYYVGDID (77 aa)) form the Cytochrome b5 heme-binding domain. 2 residues coordinate heme: His40 and His64. The chain crosses the membrane as a helical span at residues 109-129 (FVIKLLQFLVPLLILGLAFGI).

The protein belongs to the cytochrome b5 family. In terms of assembly, interacts with CER1, BI-1, FAH1 and FAH2. In terms of tissue distribution, expressed in roots, stems, leaves, flowers and siliques.

The protein localises to the endoplasmic reticulum membrane. Its function is as follows. Membrane bound hemoprotein which function as an electron carrier for several membrane bound oxygenases, including fatty acid desaturases. The sequence is that of Cytochrome B5 isoform D from Arabidopsis thaliana (Mouse-ear cress).